The sequence spans 437 residues: Aminopeptidase W (437 aa).

Active-site residues include Cys-70, His-361, and Asn-382.

It belongs to the peptidase C1 family.

It is found in the cytoplasm. The polypeptide is Aminopeptidase W (pepW) (Lactobacillus delbrueckii subsp. lactis).